Reading from the N-terminus, the 334-residue chain is Holliday junction branch migration complex subunit RuvB (334 aa).

A large ATPase domain (RuvB-L) region spans residues 1–182; sequence MDKRMVDQEF…FGVHLRLEYY (182 aa). Residues Leu-21, Arg-22, Gly-63, Lys-66, Thr-67, Thr-68, 129 to 131, Arg-172, Tyr-182, and Arg-219 each bind ATP; that span reads EDF. Thr-67 is a binding site for Mg(2+). Positions 183–253 are small ATPAse domain (RuvB-S); sequence NENDLKEIIT…TTKRALQLLQ (71 aa). Residues 256-334 form a head domain (RuvB-H) region; the sequence is QHGLDYIDHK…HFNTTNEKRE (79 aa). Arg-292, Arg-311, and Arg-316 together coordinate DNA.

It belongs to the RuvB family. In terms of assembly, homohexamer. Forms an RuvA(8)-RuvB(12)-Holliday junction (HJ) complex. HJ DNA is sandwiched between 2 RuvA tetramers; dsDNA enters through RuvA and exits via RuvB. An RuvB hexamer assembles on each DNA strand where it exits the tetramer. Each RuvB hexamer is contacted by two RuvA subunits (via domain III) on 2 adjacent RuvB subunits; this complex drives branch migration. In the full resolvosome a probable DNA-RuvA(4)-RuvB(12)-RuvC(2) complex forms which resolves the HJ.

Its subcellular location is the cytoplasm. The catalysed reaction is ATP + H2O = ADP + phosphate + H(+). The RuvA-RuvB-RuvC complex processes Holliday junction (HJ) DNA during genetic recombination and DNA repair, while the RuvA-RuvB complex plays an important role in the rescue of blocked DNA replication forks via replication fork reversal (RFR). RuvA specifically binds to HJ cruciform DNA, conferring on it an open structure. The RuvB hexamer acts as an ATP-dependent pump, pulling dsDNA into and through the RuvAB complex. RuvB forms 2 homohexamers on either side of HJ DNA bound by 1 or 2 RuvA tetramers; 4 subunits per hexamer contact DNA at a time. Coordinated motions by a converter formed by DNA-disengaged RuvB subunits stimulates ATP hydrolysis and nucleotide exchange. Immobilization of the converter enables RuvB to convert the ATP-contained energy into a lever motion, pulling 2 nucleotides of DNA out of the RuvA tetramer per ATP hydrolyzed, thus driving DNA branch migration. The RuvB motors rotate together with the DNA substrate, which together with the progressing nucleotide cycle form the mechanistic basis for DNA recombination by continuous HJ branch migration. Branch migration allows RuvC to scan DNA until it finds its consensus sequence, where it cleaves and resolves cruciform DNA. In Staphylococcus epidermidis (strain ATCC 35984 / DSM 28319 / BCRC 17069 / CCUG 31568 / BM 3577 / RP62A), this protein is Holliday junction branch migration complex subunit RuvB.